A 99-amino-acid chain; its full sequence is Aspartyl/glutamyl-tRNA(Asn/Gln) amidotransferase subunit C (99 aa).

The protein belongs to the GatC family. Heterotrimer of A, B and C subunits.

It catalyses the reaction L-glutamyl-tRNA(Gln) + L-glutamine + ATP + H2O = L-glutaminyl-tRNA(Gln) + L-glutamate + ADP + phosphate + H(+). The enzyme catalyses L-aspartyl-tRNA(Asn) + L-glutamine + ATP + H2O = L-asparaginyl-tRNA(Asn) + L-glutamate + ADP + phosphate + 2 H(+). Its function is as follows. Allows the formation of correctly charged Asn-tRNA(Asn) or Gln-tRNA(Gln) through the transamidation of misacylated Asp-tRNA(Asn) or Glu-tRNA(Gln) in organisms which lack either or both of asparaginyl-tRNA or glutaminyl-tRNA synthetases. The reaction takes place in the presence of glutamine and ATP through an activated phospho-Asp-tRNA(Asn) or phospho-Glu-tRNA(Gln). The polypeptide is Aspartyl/glutamyl-tRNA(Asn/Gln) amidotransferase subunit C (Burkholderia lata (strain ATCC 17760 / DSM 23089 / LMG 22485 / NCIMB 9086 / R18194 / 383)).